We begin with the raw amino-acid sequence, 130 residues long: Small ribosomal subunit protein uS8 (130 aa).

The protein belongs to the universal ribosomal protein uS8 family. Part of the 30S ribosomal subunit. Contacts proteins S5 and S12.

In terms of biological role, one of the primary rRNA binding proteins, it binds directly to 16S rRNA central domain where it helps coordinate assembly of the platform of the 30S subunit. This Buchnera aphidicola subsp. Schizaphis graminum (strain Sg) protein is Small ribosomal subunit protein uS8.